Consider the following 407-residue polypeptide: Oligopeptide transport system permease protein OppB (407 aa).

6 consecutive transmembrane segments (helical) span residues 9 to 29 (LGLA…LVNA), 101 to 121 (LYVV…LGMV), 134 to 154 (INVL…LGLL), 179 to 199 (FLLA…AAFT), 238 to 258 (IIPS…GGFI), and 288 to 308 (ILFI…IYVL). Positions 97–307 (VPNTLYVVLI…ASVFIEFIYV (211 aa)) constitute an ABC transmembrane type-1 domain.

This sequence belongs to the binding-protein-dependent transport system permease family. OppBC subfamily. In terms of assembly, the complex is composed of two ATP-binding proteins (OppD and OppF), two transmembrane proteins (OppB and OppC) and a solute-binding protein (OppA).

The protein resides in the cell membrane. In terms of biological role, part of the ABC transporter complex OppABCDF involved in the uptake of oligopeptides. Probably responsible for the translocation of the substrate across the membrane. The protein is Oligopeptide transport system permease protein OppB (oppB) of Mycoplasma genitalium (strain ATCC 33530 / DSM 19775 / NCTC 10195 / G37) (Mycoplasmoides genitalium).